Here is a 179-residue protein sequence, read N- to C-terminus: Probable chemoreceptor glutamine deamidase CheD 2 (179 aa).

It belongs to the CheD family.

It carries out the reaction L-glutaminyl-[protein] + H2O = L-glutamyl-[protein] + NH4(+). Probably deamidates glutamine residues to glutamate on methyl-accepting chemotaxis receptors (MCPs), playing an important role in chemotaxis. This chain is Probable chemoreceptor glutamine deamidase CheD 2, found in Ruegeria sp. (strain TM1040) (Silicibacter sp.).